We begin with the raw amino-acid sequence, 417 residues long: NADH-quinone oxidoreductase subunit D (417 aa).

Belongs to the complex I 49 kDa subunit family. In terms of assembly, NDH-1 is composed of 14 different subunits. Subunits NuoB, C, D, E, F, and G constitute the peripheral sector of the complex.

Its subcellular location is the cell inner membrane. The catalysed reaction is a quinone + NADH + 5 H(+)(in) = a quinol + NAD(+) + 4 H(+)(out). In terms of biological role, NDH-1 shuttles electrons from NADH, via FMN and iron-sulfur (Fe-S) centers, to quinones in the respiratory chain. The immediate electron acceptor for the enzyme in this species is believed to be ubiquinone. Couples the redox reaction to proton translocation (for every two electrons transferred, four hydrogen ions are translocated across the cytoplasmic membrane), and thus conserves the redox energy in a proton gradient. This Burkholderia thailandensis (strain ATCC 700388 / DSM 13276 / CCUG 48851 / CIP 106301 / E264) protein is NADH-quinone oxidoreductase subunit D.